The following is a 330-amino-acid chain: Urokinase plasminogen activator surface receptor (330 aa).

The signal sequence occupies residues 1–20 (MGQPLLLLLLVYTYIPGSWG). UPAR/Ly6 domains lie at 21–112 (LRCL…RNRY), 113–208 (LECA…PPNG), and 209–300 (LQCY…PGKG). Disulfide bonds link Cys23-Cys44, Cys26-Cys32, and Cys37-Cys65. Asn28 carries N-linked (GlcNAc...) asparagine glycosylation. N-linked (GlcNAc...) asparagine glycosylation is present at Asn72. Cystine bridges form between Cys91–Cys96, Cys115–Cys142, Cys118–Cys125, Cys135–Cys164, Cys170–Cys187, Cys188–Cys193, Cys211–Cys239, Cys214–Cys222, Cys232–Cys258, Cys264–Cys282, and Cys283–Cys288. 2 N-linked (GlcNAc...) asparagine glycosylation sites follow: Asn179 and Asn189. An N-linked (GlcNAc...) asparagine glycan is attached at Asn279. Gly300 carries GPI-anchor amidated glycine lipidation. Positions 301–330 (GAPKTSPAHLSFFVSLLLTARLWGATLLCT) are cleaved as a propeptide — removed in mature form.

As to quaternary structure, monomer. Interacts (via the UPAR/Ly6 domains) with SRPX2. Interacts with MRC2. Interacts with SORL1 (via N-terminal ectodomain); this interaction decreases PLAUR internalization. The ternary complex composed of PLAUR-PLAU-SERPINE1 also interacts with SORL1. Interacts with CD82; this interaction prevents PLAUR from binding to its high affinity ligand PLAU.

The protein resides in the cell membrane. Acts as a receptor for urokinase plasminogen activator. Plays a role in localizing and promoting plasmin formation. Mediates the proteolysis-independent signal transduction activation effects of U-PA. The protein is Urokinase plasminogen activator surface receptor (PLAUR) of Bos taurus (Bovine).